The primary structure comprises 528 residues: U3 small nucleolar RNA-associated protein 15 homolog (528 aa).

Ala-2 bears the N-acetylalanine mark. WD repeat units lie at residues 36-75, 78-117, 120-159, 162-202, 204-242, 246-285, and 287-326; these read KEFG…PVKT, RFKD…PLRQ, GHTK…EILT, EHSD…NVLC, EHGQ…QLLV, NHHK…VVHS, and DYAA…KKTS. Lys-249 participates in a covalent cross-link: Glycyl lysine isopeptide (Lys-Gly) (interchain with G-Cter in SUMO2). Residues 496-528 form a disordered region; sequence RNDSDPVPEHVPAELPEEKTESPTQPSDTDKNS. Basic and acidic residues predominate over residues 497–516; it reads NDSDPVPEHVPAELPEEKTE.

In terms of assembly, part of the small subunit (SSU) processome, composed of more than 70 proteins and the RNA chaperone small nucleolar RNA (snoRNA) U3. May be a component of the proposed t-UTP subcomplex of the ribosomal small subunit (SSU) processome containing at least UTP4, WDR43, HEATR1, UTP15, WDR75. Interacts directly with UTP4 and WDR43.

The protein localises to the nucleus. It is found in the nucleolus. Its function is as follows. Ribosome biogenesis factor. Involved in nucleolar processing of pre-18S ribosomal RNA. Required for optimal pre-ribosomal RNA transcription by RNA polymerase I. Part of the small subunit (SSU) processome, first precursor of the small eukaryotic ribosomal subunit. During the assembly of the SSU processome in the nucleolus, many ribosome biogenesis factors, an RNA chaperone and ribosomal proteins associate with the nascent pre-rRNA and work in concert to generate RNA folding, modifications, rearrangements and cleavage as well as targeted degradation of pre-ribosomal RNA by the RNA exosome. This Mus musculus (Mouse) protein is U3 small nucleolar RNA-associated protein 15 homolog (Utp15).